Reading from the N-terminus, the 229-residue chain is Elongation factor 1-delta 1 (229 aa).

Positions 80-109 (ESTAVPSASTPDVADAKAPAADDDDDDDVD) are disordered. Over residues 100 to 109 (ADDDDDDDVD) the composition is skewed to acidic residues.

This sequence belongs to the EF-1-beta/EF-1-delta family. EF-1 is composed of 4 subunits: alpha, beta (1B-alpha=beta'), delta (1B-beta), and gamma (1B-gamma).

Its function is as follows. EF-1-beta and EF-1-beta' stimulate the exchange of GDP bound to EF-1-alpha to GTP. The protein is Elongation factor 1-delta 1 of Oryza sativa subsp. japonica (Rice).